The following is a 172-amino-acid chain: C-phycocyanin beta chain (172 aa).

Residues asparagine 35, aspartate 39, asparagine 72, arginine 77, cysteine 82, 82-88, 149-151, and cysteine 153 contribute to the (2R,3E)-phycocyanobilin site; these read CLRDMEI and TIG. An N4-methylasparagine modification is found at asparagine 72.

The protein belongs to the phycobiliprotein family. As to quaternary structure, heterodimer of an alpha and a beta subunit, which further assembles into trimers and the trimers into hexamers. The basic functional unit of phycobiliproteins is a ring-shaped hexamer formed from two back-to-back trimers contacting via the alpha chain subunits. The trimers are composed of alpha/beta subunit heterodimers arranged around a three-fold axis of symmetry. The phycoerythrins also contain a gamma subunit which is located in the center of the hexamer. In terms of processing, contains two covalently linked phycocyanobilin chromophores.

It localises to the plastid. The protein localises to the chloroplast thylakoid membrane. In terms of biological role, light-harvesting photosynthetic tetrapyrrole chromophore-protein from the phycobiliprotein complex (phycobilisome, PBS). Phycocyanin is the major phycobiliprotein in the PBS rod. This Cyanidium caldarium (Red alga) protein is C-phycocyanin beta chain (cpcB).